A 698-amino-acid polypeptide reads, in one-letter code: Polyribonucleotide nucleotidyltransferase (698 aa).

The Mg(2+) site is built by Asp-487 and Asp-493. Residues 555 to 614 form the KH domain; that stretch reads PKIIQIQIDPQKIGDVVGQRGKTINAIIEQTGVKIDINDEGAVSVCGTDKDMMDKAINMI. The S1 motif domain maps to 624–692; sequence GQVFEGKVIS…KMGRISFSIK (69 aa).

Belongs to the polyribonucleotide nucleotidyltransferase family. Mg(2+) serves as cofactor.

The protein localises to the cytoplasm. The enzyme catalyses RNA(n+1) + phosphate = RNA(n) + a ribonucleoside 5'-diphosphate. Its function is as follows. Involved in mRNA degradation. Catalyzes the phosphorolysis of single-stranded polyribonucleotides processively in the 3'- to 5'-direction. In Lachnoclostridium phytofermentans (strain ATCC 700394 / DSM 18823 / ISDg) (Clostridium phytofermentans), this protein is Polyribonucleotide nucleotidyltransferase.